Reading from the N-terminus, the 127-residue chain is Protein ApaG (127 aa).

One can recognise an ApaG domain in the interval 3 to 127 (KTSIPDFQIT…FYLIAPLALH (125 aa)).

The chain is Protein ApaG from Bdellovibrio bacteriovorus (strain ATCC 15356 / DSM 50701 / NCIMB 9529 / HD100).